Consider the following 346-residue polypeptide: MQQEKELVKQKAKELLLDLLSIYTPSKNETNATKFFEKISNEFNLKLEILPDSNSFILGEGEILLASHVDTVPGYIEPKIENEVIYGRGAVDAKGPLISMIIAAWLLNEKGIKVMVSGLADEESTSIGAKELTLKNFNFKHIIVGEPSNGTDIVVEYRGSIQLDIMCESTPEHSSSAKSNLIVDISKKIIEVYKQPENYDKPSIVPTIIRAGESYNVTPAKLYLHFDVRYAINNKRDDLINEIKDKFQECGLKIVDETQPVKVSINNPVVKSLTRALLKQNIKPRLVRKAGTSDMNILQKITTSIATYGPGNSMLEHTNQEKITLDEIYIGVKTYMLAIEELWQKS.

Histidine 68 provides a ligand contact to Zn(2+). Aspartate 70 is a catalytic residue. Residue aspartate 92 participates in Zn(2+) binding. The active-site Proton acceptor is the glutamate 122. Zn(2+) is bound by residues glutamate 123, glutamate 146, and histidine 317.

This sequence belongs to the peptidase M20A family. LysK subfamily. Zn(2+) is required as a cofactor. The cofactor is Co(2+).

Its subcellular location is the cytoplasm. The catalysed reaction is [amino-group carrier protein]-C-terminal-gamma-(L-lysyl)-L-glutamate + H2O = [amino-group carrier protein]-C-terminal-L-glutamate + L-lysine. It catalyses the reaction [amino-group carrier protein]-C-terminal-gamma-(L-ornithyl)-L-glutamate + H2O = [amino-group carrier protein]-C-terminal-L-glutamate + L-ornithine. Its pathway is amino-acid biosynthesis; L-lysine biosynthesis via AAA pathway; L-lysine from L-alpha-aminoadipate (Thermus route): step 5/5. It participates in amino-acid biosynthesis; L-arginine biosynthesis. Its function is as follows. Catalyzes the release of L-lysine from [LysW]-gamma-L-lysine and the release of L-ornithine from [LysW]-L-ornithine. The polypeptide is [LysW]-lysine/[LysW]-ornithine hydrolase (Saccharolobus islandicus (strain Y.N.15.51 / Yellowstone #2) (Sulfolobus islandicus)).